We begin with the raw amino-acid sequence, 193 residues long: MDDLLAELKSEMDAAGVDADVEFSLPTLELTAALDATIDDTSQLYTDDPPHHYTDTPLTGDDLPLLEAWLDDAQLHGVGDDIIAEYIDEVLLVLITVRGGACGKELLQDVRRLFGADVSPGTMYPHLKQLADAGLLEMSELTKRKVYRVADAQAAIEHVDSVVLQLLTFAVGLQTIMADCIVNQSADPQPQDE.

DNA is bound at residue 143-148 (KRKVYR). Residues 153–184 (QAAIEHVDSVVLQLLTFAVGLQTIMADCIVNQ) form a leucine-zipper region.

Homodimer. Interacts with endogenous GvpD, also with GvpD from H.mediterranei.

It localises to the cytoplasm. Degraded once GvpD is translated; degradation requires 'Arg-494' of GvpD; tested in transgenic H.volcanii. Fusion of green fluorescent protein to its C-terminus partially protects it from degradation. In terms of biological role, plays a regulatory role in gas vesicle synthesis, required to activate transcription of the c-gvpA operon. Gas vesicles are hollow, gas filled proteinaceous nanostructures found in several microbial planktonic microorganisms. They allow positioning of halobacteria at the optimal depth for growth in the poorly aerated, shallow brine pools of their habitat. Functionally, expression of 2 c-vac DNA fragments containing 2 divergently transcribed regions (gvpE-gvpF-gvpG-gvpH-gvpI-gvpJ-gvpK-gvpL-gvpM and gvpA-gvpC-gvpN-gvpO) allows H.volcanii to produce gas vesicles. All site-directed mutagenesis is tested in H.volcanii. This is Transcriptional activator GvpE2 from Halobacterium salinarum (strain ATCC 700922 / JCM 11081 / NRC-1) (Halobacterium halobium).